We begin with the raw amino-acid sequence, 229 residues long: Urease accessory protein UreF (229 aa).

Belongs to the UreF family. UreD, UreF and UreG form a complex that acts as a GTP-hydrolysis-dependent molecular chaperone, activating the urease apoprotein by helping to assemble the nickel containing metallocenter of UreC. The UreE protein probably delivers the nickel.

The protein localises to the cytoplasm. Functionally, required for maturation of urease via the functional incorporation of the urease nickel metallocenter. This Staphylococcus aureus (strain JH1) protein is Urease accessory protein UreF.